We begin with the raw amino-acid sequence, 202 residues long: MSRYRGPRVRIIRRLGTLPGLTNKTPQLKSSSINQSISNKKISQYRIRLEEKQKLRFHYGITERQLLNYVRIARKAKGSTGEVLLQLLEMRLDNVTFRLGMAPTIPGARQLVNHRHILVNDCIVDIPSYRCKPQDFITIKNQRKSETIISKNIEFYQKSKIPNHLTYSSLEKKGLVNQILDRESIGLKINELLVVEYYSRQA.

Positions 90-153 (MRLDNVTFRL…KSETIISKNI (64 aa)) constitute an S4 RNA-binding domain.

This sequence belongs to the universal ribosomal protein uS4 family. As to quaternary structure, part of the 30S ribosomal subunit. Contacts protein S5. The interaction surface between S4 and S5 is involved in control of translational fidelity.

The protein resides in the plastid. The protein localises to the chloroplast. One of the primary rRNA binding proteins, it binds directly to 16S rRNA where it nucleates assembly of the body of the 30S subunit. In terms of biological role, with S5 and S12 plays an important role in translational accuracy. The chain is Small ribosomal subunit protein uS4c (rps4) from Hypnum cupressiforme (Cypress-leaved plait-moss).